We begin with the raw amino-acid sequence, 781 residues long: MMEEGRKEEPEERGEKSTMRDLLQRAVDKGHLTAREALDRWTLEDHGEIHPWIILFCFAGAIGVIGGWGLRGELNVCMLIVLVVLVPIYWGIGEAARNIDSLDWKWIRKVFIVIIFVLVGLLGGCSAQRQHVAMLLSPPGIRLPSTVDIPWFCISNAPIPDCVHWTVQKPDQKHQQIENVMELQEVLDNATFFEVPDLFDRVYLELARLDANSTGVPVNIPPTGISQVKGDCSTGDIQGMNETLSTRGTLGERTFLSIRPGGWFTNTTVWFCVHWPFGFIQRKENLSEGSAQVRNCLDPINVTEPRVANYSYCPLEYKGKNYINKGLKCVGGRVDLSSNPEQHTDLLACGTFCQNFRNCDMVSRDILIGYHPSQQKQHIYINHTFWEQANTQWILVQVPNYGFVPVPDTERPWKGGKPRGKRAVGMVIFLLVLAIMAMTASVTAAATLVKQHATAQVVGRLSTNLTYITKIQNQYLHLFQNLNTRVNNLHHRVTYLEFLAEVHEVQTGLGCVPRGRYCHFDWRPEEVGLNMTLWNSTTWQQWMSYYDQIEENIWNLKYNWSEALEKGKSNTDGLEPDVFRYLADLSSSFTWGSWVDKLVWLAYILLAYFAFKVLQCIMSNLGAQTRYQLLNAQEDTDPAGDGDQPDDHRSGDTPRSGVPSGGWSQKLSEGKKIGCLILRTEWQNWRNDLRTLRWLTLGGKILQLPLSLLVLLVRILLHILSPTFQNQRGWTVGRKGTGGDDRELSPELEYLSWTGSSQEMVEMRDLKEEDIPEEGIRPVEM.

The Extracellular segment spans residues 1 to 597; that stretch reads MMEEGRKEEP…SFTWGSWVDK (597 aa). Asparagine 189, asparagine 212, asparagine 241, asparagine 266, asparagine 285, asparagine 301, asparagine 309, and asparagine 382 each carry an N-linked (GlcNAc...) asparagine; by host glycan. The tract at residues 423–443 is fusion peptide; it reads AVGMVIFLLVLAIMAMTASVT. Asparagine 464 carries an N-linked (GlcNAc...) asparagine; by host glycan. The interval 482-498 is immunosuppression; that stretch reads LNTRVNNLHHRVTYLEF. N-linked (GlcNAc...) asparagine; by host glycosylation is found at asparagine 530, asparagine 535, and asparagine 559. Residues 598 to 618 form a helical membrane-spanning segment; the sequence is LVWLAYILLAYFAFKVLQCIM. Residues 619-781 are Cytoplasmic-facing; that stretch reads SNLGAQTRYQ…PEEGIRPVEM (163 aa). Residues 634-644 show a composition bias toward acidic residues; that stretch reads EDTDPAGDGDQ. The segment at 634 to 666 is disordered; the sequence is EDTDPAGDGDQPDDHRSGDTPRSGVPSGGWSQK.

In terms of assembly, the mature envelope protein (Env) consists of a trimer of SU-TM heterodimers attached by non-covalent interactions or by a labile interchain disulfide bond. In terms of processing, specific enzymatic cleavages in vivo yield mature proteins. Envelope glycoproteins are synthesized as an inactive precursor that is N-glycosylated and processed likely by host cell furin or by a furin-like protease in the Golgi to yield the mature SU and TM proteins. The cleavage site between SU and TM requires the minimal sequence [KR]-X-[KR]-R.

Its subcellular location is the virion membrane. The protein resides in the host cell membrane. The surface protein (SU) attaches the virus to the host cell by binding to its receptor. This interaction triggers the refolding of the transmembrane protein (TM) and is thought to activate its fusogenic potential by unmasking its fusion peptide. Fusion occurs at the host cell plasma membrane. Its function is as follows. The transmembrane protein (TM) acts as a class I viral fusion protein. Under the current model, the protein has at least 3 conformational states: pre-fusion native state, pre-hairpin intermediate state, and post-fusion hairpin state. During viral and target cell membrane fusion, the coiled coil regions (heptad repeats) assume a trimer-of-hairpins structure, positioning the fusion peptide in close proximity to the C-terminal region of the ectodomain. The formation of this structure appears to drive apposition and subsequent fusion of viral and target cell membranes. Membranes fusion leads to delivery of the nucleocapsid into the cytoplasm. The sequence is that of Envelope glycoprotein (env) from Bos javanicus (Wild banteng).